A 509-amino-acid chain; its full sequence is Maturase K (509 aa).

It belongs to the intron maturase 2 family. MatK subfamily.

Its subcellular location is the plastid. The protein localises to the chloroplast. Its function is as follows. Usually encoded in the trnK tRNA gene intron. Probably assists in splicing its own and other chloroplast group II introns. This chain is Maturase K, found in Solanum tuberosum (Potato).